Here is a 683-residue protein sequence, read N- to C-terminus: Putative boron transporter 5 (683 aa).

Over Met-1–Gly-38 the chain is Cytoplasmic. The chain crosses the membrane as a helical span at residues Phe-39–Phe-59. At Gly-60–Thr-80 the chain is on the extracellular side. The chain crosses the membrane as a helical span at residues Ala-81–Ala-101. Topologically, residues Glu-102–Tyr-126 are cytoplasmic. Residues Leu-127–Phe-147 form a helical membrane-spanning segment. Residues Asn-148 to Arg-158 lie on the Extracellular side of the membrane. A helical membrane pass occupies residues Ile-159–Gly-179. At Met-180–Glu-200 the chain is on the cytoplasmic side. Residues Trp-201–Leu-221 traverse the membrane as a helical segment. Residues Lys-222–Ser-238 are Extracellular-facing. The helical transmembrane segment at Phe-239–Thr-259 threads the bilayer. At Pro-260–Val-294 the chain is on the cytoplasmic side. Residues Ser-295 to Phe-315 traverse the membrane as a helical segment. The Extracellular portion of the chain corresponds to Asp-316 to Ser-335. Residues Ala-336 to Leu-356 form a helical membrane-spanning segment. At Pro-357–Ser-477 the chain is on the cytoplasmic side. A helical transmembrane segment spans residues Leu-478–Leu-498. Residues Trp-499–Gly-565 lie on the Extracellular side of the membrane. The helical transmembrane segment at Val-566–Ile-586 threads the bilayer. Residues Arg-587 to Glu-683 are Cytoplasmic-facing.

This sequence belongs to the anion exchanger (TC 2.A.31.3) family.

Its subcellular location is the membrane. Its function is as follows. Putative boron transporter. Boron is essential for maintaining the integrity of plants cell walls. In Arabidopsis thaliana (Mouse-ear cress), this protein is Putative boron transporter 5 (BOR5).